A 235-amino-acid chain; its full sequence is Large ribosomal subunit protein uL1 (235 aa).

This sequence belongs to the universal ribosomal protein uL1 family. As to quaternary structure, part of the 50S ribosomal subunit.

Its function is as follows. Binds directly to 23S rRNA. The L1 stalk is quite mobile in the ribosome, and is involved in E site tRNA release. In terms of biological role, protein L1 is also a translational repressor protein, it controls the translation of the L11 operon by binding to its mRNA. The polypeptide is Large ribosomal subunit protein uL1 (Mycobacterium bovis (strain ATCC BAA-935 / AF2122/97)).